Reading from the N-terminus, the 403-residue chain is ATP phosphoribosyltransferase regulatory subunit (403 aa).

It belongs to the class-II aminoacyl-tRNA synthetase family. HisZ subfamily. As to quaternary structure, heteromultimer composed of HisG and HisZ subunits.

Its subcellular location is the cytoplasm. It functions in the pathway amino-acid biosynthesis; L-histidine biosynthesis; L-histidine from 5-phospho-alpha-D-ribose 1-diphosphate: step 1/9. Required for the first step of histidine biosynthesis. May allow the feedback regulation of ATP phosphoribosyltransferase activity by histidine. The protein is ATP phosphoribosyltransferase regulatory subunit of Nostoc punctiforme (strain ATCC 29133 / PCC 73102).